A 142-amino-acid chain; its full sequence is Nucleoside diphosphate kinase (142 aa).

Residues Lys10, Phe58, Arg86, Thr92, Arg103, and Asn113 each contribute to the ATP site. His116 serves as the catalytic Pros-phosphohistidine intermediate.

The protein belongs to the NDK family. In terms of assembly, homotetramer. Mg(2+) serves as cofactor.

It is found in the cytoplasm. The enzyme catalyses a 2'-deoxyribonucleoside 5'-diphosphate + ATP = a 2'-deoxyribonucleoside 5'-triphosphate + ADP. The catalysed reaction is a ribonucleoside 5'-diphosphate + ATP = a ribonucleoside 5'-triphosphate + ADP. Major role in the synthesis of nucleoside triphosphates other than ATP. The ATP gamma phosphate is transferred to the NDP beta phosphate via a ping-pong mechanism, using a phosphorylated active-site intermediate. This is Nucleoside diphosphate kinase from Ehrlichia chaffeensis (strain ATCC CRL-10679 / Arkansas).